Here is a 291-residue protein sequence, read N- to C-terminus: ATP synthase gamma chain (291 aa).

This sequence belongs to the ATPase gamma chain family. As to quaternary structure, F-type ATPases have 2 components, CF(1) - the catalytic core - and CF(0) - the membrane proton channel. CF(1) has five subunits: alpha(3), beta(3), gamma(1), delta(1), epsilon(1). CF(0) has three main subunits: a, b and c.

It localises to the cell inner membrane. In terms of biological role, produces ATP from ADP in the presence of a proton gradient across the membrane. The gamma chain is believed to be important in regulating ATPase activity and the flow of protons through the CF(0) complex. This Rhodopseudomonas palustris (strain HaA2) protein is ATP synthase gamma chain.